We begin with the raw amino-acid sequence, 79 residues long: uncharacterized protein (79 aa).

This is an uncharacterized protein from Escherichia coli (strain K12).